A 198-amino-acid polypeptide reads, in one-letter code: MSTAVQVDDVMRYRDSRFQTIAAKLLPTQYLVVDDDTALTTTLGSCVAACLRDPVLKIGGMNHFLLPKGQVGDGAPTRYGSYAMELLINDMLKRGAHRKRIEAKVFGGANVLKGFTSNPVGTRNAEFVRQYLQAEHIPIIAEDLCGIHPRKVWFFATTGRVVVQRLPHAHEAEVAATESAVRARLSKAPVTGGVELFE.

Belongs to the CheD family.

The catalysed reaction is L-glutaminyl-[protein] + H2O = L-glutamyl-[protein] + NH4(+). In terms of biological role, probably deamidates glutamine residues to glutamate on methyl-accepting chemotaxis receptors (MCPs), playing an important role in chemotaxis. This Xanthomonas euvesicatoria pv. vesicatoria (strain 85-10) (Xanthomonas campestris pv. vesicatoria) protein is Probable chemoreceptor glutamine deamidase CheD.